Reading from the N-terminus, the 71-residue chain is Cytochrome c oxidase subunit 7, mitochondrial (71 aa).

The Mitochondrial matrix segment spans residues 1-35 (MPGLVNAPNHVPEKQRYYQQAFKNHTRLWKIGPRS). The helical transmembrane segment at 36–58 (GIIMTTFNIAMWGTFGASMYAMS) threads the bilayer. Over 59–71 (RKVLGYNTWFSED) the chain is Mitochondrial intermembrane.

This sequence belongs to the cytochrome c oxidase VIIa family. In terms of assembly, component of the cytochrome c oxidase (complex IV, CIV), a multisubunit enzyme composed of 11 subunits. The complex is composed of a catalytic core of 3 subunits Cox1, Cox2 and Cox3, encoded in the mitochondrial DNA, and 8 supernumerary subunits Cox4, Cox5a/Cox5, Cox6, Cox7, Cox8, Cox7a/Cox9, Cox6b/Cox12 and Cox6a/Cox13, which are encoded in the nuclear genome. The complex exists as a monomer or a dimer and forms respiratory supercomplexes (SCs) in the inner mitochondrial membrane with NADH-ubiquinone oxidoreductase (complex I, CI) and ubiquinol-cytochrome c oxidoreductase (cytochrome b-c1 complex, complex III, CIII), resulting in various different assemblies (supercomplexes I(1)IV(1), I(1)III(3)IV(2), III(2)IV(1) and III(2)IV(2) as well as larger supercomplexes of compositions like I(1)III(2)IV(5-6)).

It localises to the mitochondrion inner membrane. It participates in energy metabolism; oxidative phosphorylation. In terms of biological role, component of the cytochrome c oxidase, the last enzyme in the mitochondrial electron transport chain which drives oxidative phosphorylation. The respiratory chain contains 3 multisubunit complexes succinate dehydrogenase (complex II, CII), ubiquinol-cytochrome c oxidoreductase (cytochrome b-c1 complex, complex III, CIII) and cytochrome c oxidase (complex IV, CIV), that cooperate to transfer electrons derived from NADH and succinate to molecular oxygen, creating an electrochemical gradient over the inner membrane that drives transmembrane transport and the ATP synthase. Cytochrome c oxidase is the component of the respiratory chain that catalyzes the reduction of oxygen to water. Electrons originating from reduced cytochrome c in the intermembrane space (IMS) are transferred via the dinuclear copper A center (CU(A)) of Cox2 and heme A of Cox1 to the active site in Cox1, a binuclear center (BNC) formed by heme A3 and copper B (CU(B)). The BNC reduces molecular oxygen to 2 water molecules using 4 electrons from cytochrome c in the IMS and 4 protons from the mitochondrial matrix. The chain is Cytochrome c oxidase subunit 7, mitochondrial from Neurospora crassa (strain ATCC 24698 / 74-OR23-1A / CBS 708.71 / DSM 1257 / FGSC 987).